The sequence spans 66 residues: Ornithorhynchus venom defensin-like peptide A (66 aa).

An N-terminal signal peptide occupies residues 1-22; that stretch reads MRLTYLLLLLVAVLFQAGSGSA. Residues 23-24 constitute a propeptide that is removed on maturation; that stretch reads EP. 3 disulfide bridges follow: cysteine 33-cysteine 63, cysteine 40-cysteine 56, and cysteine 48-cysteine 64.

In terms of tissue distribution, produced by the crural gland and detected in venom from the spur located on each male hind leg. Is the only OvDLP that is expressed in venom gland alone.

It localises to the secreted. In terms of biological role, does not show antimicrobial, myotoxic, hemolytic and cell-promoting activities. The protein is Ornithorhynchus venom defensin-like peptide A of Ornithorhynchus anatinus (Duckbill platypus).